The primary structure comprises 313 residues: Olfactory receptor 4Q3 (313 aa).

At 1–25 the chain is on the extracellular side; that stretch reads MKKEQDSNVTEFVLLGLSSSWELQL. The N-linked (GlcNAc...) asparagine glycan is linked to N8. The helical transmembrane segment at 26–49 threads the bilayer; it reads FLFLLFLFFYIAIVLGNLLIVVTV. Topologically, residues 50–58 are cytoplasmic; sequence QAHAHLLQS. The helical transmembrane segment at 59-80 threads the bilayer; the sequence is PMYYFLGHLSFIDLCLSCVTVP. The Extracellular portion of the chain corresponds to 81 to 101; that stretch reads KMLGDFLQQGKSISFSGCLAQ. A disulfide bridge links C98 with C190. The helical transmembrane segment at 102–121 threads the bilayer; that stretch reads IYFLHFLGASEMFLLTVMAY. Topologically, residues 122–140 are cytoplasmic; it reads DRYVAICNPLRYLTVMNPQ. The chain crosses the membrane as a helical span at residues 141-159; that stretch reads LCLWLVLACWCGGFIHSIM. Residues 160 to 196 are Extracellular-facing; it reads QVILVIQLPFCGPNELDNFYCDVPQVIKLACMDTYVV. Residues 197-220 traverse the membrane as a helical segment; that stretch reads EVLVIANSGLLSLVCFLVLLFSYA. At 221–236 the chain is on the cytoplasmic side; it reads IILITLRTHFCQGQNK. A helical membrane pass occupies residues 237 to 259; that stretch reads VFSTCASHLTVVSLIFVPCVFIY. Topologically, residues 260–270 are extracellular; it reads LRPFCSFSVDK. Residues 271–290 form a helical membrane-spanning segment; sequence IFSLFYTVITPMLNPLIYTL. Residues 291–313 are Cytoplasmic-facing; that stretch reads RNTDMKTAMKKLRIKPCGIPLPC.

The protein belongs to the G-protein coupled receptor 1 family.

Its subcellular location is the cell membrane. Odorant receptor. This Homo sapiens (Human) protein is Olfactory receptor 4Q3 (OR4Q3).